The sequence spans 1904 residues: Fatty acid synthase beta subunit hexB (1904 aa).

The interval 24-395 is acetyltransferase (AT) domain; sequence LSVAFGGQGP…TEGTGVRVIQ (372 aa). Residues 447 to 691 are enoyl reductase (ER) domain; the sequence is TQLLNAPPVM…LIVQTEGVGD (245 aa). The dehydratase (DH) domain stretch occupies residues 1001-1491; sequence GPAADCWTHH…RPNDRLKIQL (491 aa). The MaoC-like domain maps to 1399 to 1512; that stretch reads PGWNEGSTVL…MKVQAFNDET (114 aa). The tract at residues 1530–1893 is malonyl/palmitoyl transferase (MT/PT) domain; sequence YVFCGQGSQE…IEHVQSVTGS (364 aa).

This sequence belongs to the fungal fatty acid synthetase subunit beta family. In terms of assembly, [Alpha(6)beta(6)] hexamers of two multifunctional subunits (alpha and beta).

The catalysed reaction is acetyl-CoA + n malonyl-CoA + 2n NADPH + 4n H(+) = a long-chain-acyl-CoA + n CoA + n CO2 + 2n NADP(+).. It carries out the reaction holo-[ACP] + acetyl-CoA = acetyl-[ACP] + CoA. It catalyses the reaction holo-[ACP] + malonyl-CoA = malonyl-[ACP] + CoA. The enzyme catalyses a (3R)-hydroxyacyl-[ACP] = a (2E)-enoyl-[ACP] + H2O. The catalysed reaction is a 2,3-saturated acyl-[ACP] + NAD(+) = a (2E)-enoyl-[ACP] + NADH + H(+). It carries out the reaction (9Z)-octadecenoyl-[ACP] + H2O = (9Z)-octadecenoate + holo-[ACP] + H(+). It functions in the pathway mycotoxin biosynthesis. In terms of biological role, fatty acid synthase beta subunit; part of the fragmented gene cluster that mediates the biosynthesis of dothistromin (DOTH), a polyketide toxin very similar in structure to the aflatoxin precursor, versicolorin B. The first step of the pathway is the conversion of acetate to norsolorinic acid (NOR) and requires the fatty acid synthase subunits hexA and hexB, as well as the polyketide synthase pksA. PksA combines a hexanoyl starter unit and 7 malonyl-CoA extender units to synthesize the precursor NOR. The hexanoyl starter unit is provided to the acyl-carrier protein (ACP) domain by the fungal fatty acid synthase hexA/hexB. The second step is the conversion of NOR to averantin (AVN) and requires the norsolorinic acid ketoreductase nor1, which catalyzes the dehydration of norsolorinic acid to form (1'S)-averantin. The cytochrome P450 monooxygenase avnA then catalyzes the hydroxylation of AVN to 5'hydroxyaverantin (HAVN). The next step is performed by adhA that transforms HAVN to averufin (AVF). Averufin might then be converted to hydroxyversicolorone by cypX and avfA. Hydroxyversicolorone is further converted versiconal hemiacetal acetate (VHA) by moxY. VHA is then the substrate for the versiconal hemiacetal acetate esterase est1 to yield versiconal (VAL). Versicolorin B synthase vbsA then converts VAL to versicolorin B (VERB) by closing the bisfuran ring. Then, the activity of the versicolorin B desaturase verB leads to versicolorin A (VERA). DotB, a predicted chloroperoxidase, may perform epoxidation of the A-ring of VERA. Alternatively, a cytochrome P450, such as cypX or avnA could catalyze this step. It is also possible that another, uncharacterized, cytochrome P450 enzyme is responsible for this step. Opening of the epoxide could potentially be achieved by the epoxide hydrolase epoA. However, epoA seems not to be required for DOTH biosynthesis, but other epoxide hydrolases may have the ability to complement this hydrolysis. Alternatively, opening of the epoxide ring could be achieved non-enzymatically. The next step is the deoxygenation of ring A to yield the 5,8-dihydroxyanthraquinone which is most likely catalyzed by the NADPH dehydrogenase encoded by ver1. The last stages of DOTH biosynthesis are proposed to involve hydroxylation of the bisfuran. OrdB and norB might have oxidative roles here. An alternative possibility is that cytochrome P450 monoogenases such as avnA and cypX might perform these steps in addition to previously proposed steps. In Dothistroma septosporum (strain NZE10 / CBS 128990) (Red band needle blight fungus), this protein is Fatty acid synthase beta subunit hexB.